A 183-amino-acid chain; its full sequence is Large ribosomal subunit protein uL5 (183 aa).

This sequence belongs to the universal ribosomal protein uL5 family. As to quaternary structure, part of the 50S ribosomal subunit; part of the 5S rRNA/L5/L18/L25 subcomplex. Contacts the 5S rRNA and the P site tRNA. Forms a bridge to the 30S subunit in the 70S ribosome.

This is one of the proteins that bind and probably mediate the attachment of the 5S RNA into the large ribosomal subunit, where it forms part of the central protuberance. In the 70S ribosome it contacts protein S13 of the 30S subunit (bridge B1b), connecting the 2 subunits; this bridge is implicated in subunit movement. Contacts the P site tRNA; the 5S rRNA and some of its associated proteins might help stabilize positioning of ribosome-bound tRNAs. This chain is Large ribosomal subunit protein uL5, found in Flavobacterium johnsoniae (strain ATCC 17061 / DSM 2064 / JCM 8514 / BCRC 14874 / CCUG 350202 / NBRC 14942 / NCIMB 11054 / UW101) (Cytophaga johnsonae).